The following is a 473-amino-acid chain: Lactate utilization protein B 2 (473 aa).

4Fe-4S ferredoxin-type domains lie at 302 to 332 (GSEFRSILQCIRCAACVNVCPVYRHVGGHSY) and 351 to 380 (YDDYKELPYASSLCGACTEACPVKIPLHDL). The [4Fe-4S] cluster site is built by Cys311, Cys314, Cys317, Cys321, Cys364, Cys367, and Cys371.

The protein belongs to the LutB/YkgF family.

Functionally, is involved in L-lactate degradation and allows cells to grow with lactate as the sole carbon source. Has probably a role as an electron transporter during oxidation of L-lactate. The chain is Lactate utilization protein B 2 from Bacillus mycoides (strain KBAB4) (Bacillus weihenstephanensis).